We begin with the raw amino-acid sequence, 354 residues long: MSLRKIIHVDCDCFYAAIEMRDDPRLAGRPMAVGGSPDHRGVIATCNYEARAYGVRSAMSSRHALKLCPDLLIVKPRFEAYREASREIHTIFRDYTELIEPLSLDEAYLDVSDSQWYSGSATRIAEDIRRRVARTLHITVSAGVAPNKFLAKIASDWRKPNGLFVITPNEVETFVAALPVARLHGVGKVTADKLTRLGIETCLHLREWSRLALVREFGSFGERLWGLARGIDERAVHNDSRRQSVSVENTYDTDLPDLASCLARLPELLDSLNERIARMDSSYRPDKPFVKVKFHDFSQTTMEQAGAGRDLESYRQLLGQAFARGGKPVRLLGVGVRLRDLRGAHEQLELFPPK.

The 182-residue stretch at 6–187 folds into the UmuC domain; that stretch reads IIHVDCDCFY…LPVARLHGVG (182 aa). Mg(2+)-binding residues include Asp-10 and Asp-105. Glu-106 is an active-site residue.

It belongs to the DNA polymerase type-Y family. As to quaternary structure, monomer. It depends on Mg(2+) as a cofactor.

It is found in the cytoplasm. It catalyses the reaction DNA(n) + a 2'-deoxyribonucleoside 5'-triphosphate = DNA(n+1) + diphosphate. Its function is as follows. Poorly processive, error-prone DNA polymerase involved in untargeted mutagenesis. Copies undamaged DNA at stalled replication forks, which arise in vivo from mismatched or misaligned primer ends. These misaligned primers can be extended by PolIV. Exhibits no 3'-5' exonuclease (proofreading) activity. May be involved in translesional synthesis, in conjunction with the beta clamp from PolIII. This is DNA polymerase IV from Pseudomonas putida (strain ATCC 47054 / DSM 6125 / CFBP 8728 / NCIMB 11950 / KT2440).